The chain runs to 163 residues: ATP synthase subunit b (163 aa).

Residues 10–29 traverse the membrane as a helical segment; that stretch reads VFMQMFHFLLMLVVLRLFAY.

This sequence belongs to the ATPase B chain family. F-type ATPases have 2 components, F(1) - the catalytic core - and F(0) - the membrane proton channel. F(1) has five subunits: alpha(3), beta(3), gamma(1), delta(1), epsilon(1). F(0) has three main subunits: a(1), b(2) and c(10-14). The alpha and beta chains form an alternating ring which encloses part of the gamma chain. F(1) is attached to F(0) by a central stalk formed by the gamma and epsilon chains, while a peripheral stalk is formed by the delta and b chains.

Its subcellular location is the cell membrane. Its function is as follows. F(1)F(0) ATP synthase produces ATP from ADP in the presence of a proton or sodium gradient. F-type ATPases consist of two structural domains, F(1) containing the extramembraneous catalytic core and F(0) containing the membrane proton channel, linked together by a central stalk and a peripheral stalk. During catalysis, ATP synthesis in the catalytic domain of F(1) is coupled via a rotary mechanism of the central stalk subunits to proton translocation. Component of the F(0) channel, it forms part of the peripheral stalk, linking F(1) to F(0). In Desulforudis audaxviator (strain MP104C), this protein is ATP synthase subunit b.